We begin with the raw amino-acid sequence, 1938 residues long: Myosin-1 (1938 aa).

Positions 1 to 27 (MSLEHEKDPGWQYLKRSREQQLADQSR) are disordered. A compositionally biased stretch (basic and acidic residues) spans 16-27 (RSREQQLADQSR). The region spanning 30–80 (DSKKNVWIPDAEEGYIEGVIKGPGPKADTVIVTAGGKDVTLKKDIVQEVNP) is the Myosin N-terminal SH3-like domain. The Myosin motor domain occupies 84-785 (EKTEDMSNLT…VVAHIEDLRD (702 aa)). K128 carries the post-translational modification N6,N6,N6-trimethyllysine. 177–184 (GESGAGKT) is an ATP binding site. Actin-binding stretches follow at residues 660 to 682 (LNKL…IPNE) and 764 to 778 (RIGH…GVVA). Positions 846–1170 (QLKCGKMAEE…NKQLEIQQDN (325 aa)) are alpha-helical tailpiece (short S2). A rodlike tail (S2 and LMM domains) region spans residues 846-1938 (QLKCGKMAEE…GQVVRSATNK (1093 aa)). Positions 846 to 1938 (QLKCGKMAEE…GQVVRSATNK (1093 aa)) form a coiled coil. Residues 919-951 (RQEVEKSLNDANDRLSEHEEKNADLEKQRRKAQ) form a disordered region. The span at 920–951 (QEVEKSLNDANDRLSEHEEKNADLEKQRRKAQ) shows a compositional bias: basic and acidic residues. Residues 1171 to 1938 (NKKKDSEIIK…GQVVRSATNK (768 aa)) form a light meromyosin (LMM) region.

Belongs to the TRAFAC class myosin-kinesin ATPase superfamily. Myosin family. Muscle myosin is a hexameric protein that consists of 2 heavy chain subunits (MHC), 2 alkali light chain subunits (MLC) and 2 regulatory light chain subunits (MLC-2). Interacts with itr-1 (via c-terminal coiled coil domain). As to expression, found exclusively in the pharyngeal muscle.

The protein resides in the cytoplasm. It is found in the myofibril. Functionally, muscle contraction. The polypeptide is Myosin-1 (Caenorhabditis elegans).